We begin with the raw amino-acid sequence, 916 residues long: Protein translocase subunit SecA (916 aa).

ATP contacts are provided by residues Gln-87, 105–109, and Asp-512; that span reads GEGKT. The segment at 857–916 is disordered; that stretch reads QHAEAPSMEQAVAGEEEELPEGPAPVVPLEPVRNEQKIGRNEPCPCGSGKKYKHCHGQLD. Residues Cys-900, Cys-902, Cys-911, and His-912 each contribute to the Zn(2+) site. Residues 906–916 show a composition bias toward basic residues; the sequence is KKYKHCHGQLD.

Belongs to the SecA family. Monomer and homodimer. Part of the essential Sec protein translocation apparatus which comprises SecA, SecYEG and auxiliary proteins SecDF-YajC and YidC. Zn(2+) serves as cofactor.

Its subcellular location is the cell inner membrane. It localises to the cytoplasm. The catalysed reaction is ATP + H2O + cellular proteinSide 1 = ADP + phosphate + cellular proteinSide 2.. Functionally, part of the Sec protein translocase complex. Interacts with the SecYEG preprotein conducting channel. Has a central role in coupling the hydrolysis of ATP to the transfer of proteins into and across the cell membrane, serving both as a receptor for the preprotein-SecB complex and as an ATP-driven molecular motor driving the stepwise translocation of polypeptide chains across the membrane. In Pseudomonas aeruginosa (strain LESB58), this protein is Protein translocase subunit SecA.